Here is a 101-residue protein sequence, read N- to C-terminus: Urease subunit beta (101 aa).

The protein belongs to the urease beta subunit family. As to quaternary structure, heterotrimer of UreA (gamma), UreB (beta) and UreC (alpha) subunits. Three heterotrimers associate to form the active enzyme.

It localises to the cytoplasm. The catalysed reaction is urea + 2 H2O + H(+) = hydrogencarbonate + 2 NH4(+). Its pathway is nitrogen metabolism; urea degradation; CO(2) and NH(3) from urea (urease route): step 1/1. The chain is Urease subunit beta from Stutzerimonas stutzeri (strain A1501) (Pseudomonas stutzeri).